A 264-amino-acid chain; its full sequence is Glycerol uptake facilitator protein (264 aa).

The Cytoplasmic segment spans residues 1-3 (MDK). Residues 4 to 32 (SLKANCIGEFLGTALLIFFGVGCVAALKV) traverse the membrane as a helical segment. Residues 33-37 (AGASF) are Periplasmic-facing. The chain crosses the membrane as a helical span at residues 38-58 (GLWEISIMWGMGVALAVYATA). The Cytoplasmic segment spans residues 59–61 (GLS). Residues 62–65 (GAHL) lie within the membrane without spanning it. Residues 66–68 (NPA) carry the NPA 1 motif. Positions 66 to 76 (NPAVTIALWKF) form an intramembrane region, helical. Residues 77 to 82 (ACFDGK) lie on the Cytoplasmic side of the membrane. A helical membrane pass occupies residues 83-106 (KVIPYIISQMLGAFFAAALVYALY). Residues 107 to 141 (RNVFIDYETVHNIVRGTQESLSLAGTFSTYPHPSL) lie on the Periplasmic side of the membrane. The helical transmembrane segment at 142–167 (SIGGAFAVEFVITAILMALIMALTDD) threads the bilayer. At 168-175 (GNGVPRGP) the chain is on the cytoplasmic side. Residues 176-192 (LAPLLIGILIAVIGGAM) traverse the membrane as a helical segment. Residues 193–196 (GPLT) are Periplasmic-facing. The stretch at 197 to 200 (GFAM) is an intramembrane region. The NPA 2 motif lies at 201–203 (NPA). The segment at residues 201–214 (NPARDFGPKFFAYL) is an intramembrane region (helical). At 215–229 (AGWGELALTGGREIP) the chain is on the periplasmic side. Residues 230–252 (YFIVPMVAPVLGALAGAWLYKKA) form a helical membrane-spanning segment. Residues 253 to 264 (IGGNLPCNCGCE) are Cytoplasmic-facing.

Belongs to the MIP/aquaporin (TC 1.A.8) family.

It localises to the cell inner membrane. The catalysed reaction is glycerol(in) = glycerol(out). Mediates glycerol diffusion across the cytoplasmic membrane via a pore-type mechanism. In Haemophilus influenzae (strain ATCC 51907 / DSM 11121 / KW20 / Rd), this protein is Glycerol uptake facilitator protein (glpF).